A 205-amino-acid polypeptide reads, in one-letter code: MLEARDLHCERDERTLFSGLSFTVDAGEWVQVTGGNGAGKTTLLRLLTGLARPDGGEVYWQGEPLRRVRDSFHRSLLWIGHQPGIKTRLTARENLHFFHPGDGARLPEALAQAGLAGFEDVPVARLSAGQQRRVALARLWLTRAALWVLDEPFTAIDVNGVARLTRRMAAHTAQGGMVILTTHQPLPGAADTVRRLALTGGEAGL.

The ABC transporter domain maps to 2–205 (LEARDLHCER…LALTGGEAGL (204 aa)). Residue 34-41 (GGNGAGKT) participates in ATP binding.

Belongs to the ABC transporter superfamily. CcmA exporter (TC 3.A.1.107) family. The complex is composed of two ATP-binding proteins (CcmA) and two transmembrane proteins (CcmB).

The protein resides in the cell inner membrane. The enzyme catalyses heme b(in) + ATP + H2O = heme b(out) + ADP + phosphate + H(+). Part of the ABC transporter complex CcmAB involved in the biogenesis of c-type cytochromes; once thought to export heme, this seems not to be the case, but its exact role is uncertain. Responsible for energy coupling to the transport system. The sequence is that of Cytochrome c biogenesis ATP-binding export protein CcmA 2 from Salmonella paratyphi A (strain ATCC 9150 / SARB42).